A 301-amino-acid chain; its full sequence is Aspartate carbamoyltransferase catalytic subunit (301 aa).

Residues arginine 46 and threonine 47 each coordinate carbamoyl phosphate. Lysine 74 is an L-aspartate binding site. The carbamoyl phosphate site is built by arginine 96, histidine 124, and glutamine 127. L-aspartate contacts are provided by arginine 157 and arginine 208. Carbamoyl phosphate-binding residues include alanine 249 and proline 250.

Belongs to the aspartate/ornithine carbamoyltransferase superfamily. ATCase family. As to quaternary structure, heterododecamer (2C3:3R2) of six catalytic PyrB chains organized as two trimers (C3), and six regulatory PyrI chains organized as three dimers (R2).

It catalyses the reaction carbamoyl phosphate + L-aspartate = N-carbamoyl-L-aspartate + phosphate + H(+). Its pathway is pyrimidine metabolism; UMP biosynthesis via de novo pathway; (S)-dihydroorotate from bicarbonate: step 2/3. Catalyzes the condensation of carbamoyl phosphate and aspartate to form carbamoyl aspartate and inorganic phosphate, the committed step in the de novo pyrimidine nucleotide biosynthesis pathway. The chain is Aspartate carbamoyltransferase catalytic subunit from Bacillus cereus (strain ATCC 14579 / DSM 31 / CCUG 7414 / JCM 2152 / NBRC 15305 / NCIMB 9373 / NCTC 2599 / NRRL B-3711).